Consider the following 164-residue polypeptide: Deoxyuridine 5'-triphosphate nucleotidohydrolase (164 aa).

Residues 66–68 (RSG), Asn79, 83–85 (TVD), and Lys93 contribute to the substrate site.

This sequence belongs to the dUTPase family. Requires Mg(2+) as cofactor.

It carries out the reaction dUTP + H2O = dUMP + diphosphate + H(+). Its pathway is pyrimidine metabolism; dUMP biosynthesis; dUMP from dCTP (dUTP route): step 2/2. This enzyme is involved in nucleotide metabolism: it produces dUMP, the immediate precursor of thymidine nucleotides and it decreases the intracellular concentration of dUTP so that uracil cannot be incorporated into DNA. The sequence is that of Deoxyuridine 5'-triphosphate nucleotidohydrolase from Rhodococcus erythropolis (strain PR4 / NBRC 100887).